The chain runs to 249 residues: O-methyltransferase adaD (249 aa).

Residues 1–15 are compositionally biased toward low complexity; that stretch reads MSSVTLTTTTTTTST. Positions 1–26 are disordered; the sequence is MSSVTLTTTTTTTSTPPKPTPKDEPQ.

It belongs to the methyltransferase superfamily.

It carries out the reaction 2-acetyl-3,4a,8,10,11,12a-hexahydroxy-1,4,4a,5,12,12a-hexahydrotetracene-1,12-dione + S-adenosyl-L-methionine = TAN-1612 + S-adenosyl-L-homocysteine + H(+). The protein operates within secondary metabolite biosynthesis. In terms of biological role, O-methyltransferase; part of the gene cluster that mediates the biosynthesis of the linear tetracyclic TAN-1612 neuropeptide Y receptor antagonist. The decaketide backbone of TAN-1612 is synthesized by the non-reducing polyketide synthase adaA via condensation of one acetyl-CoA starter unit with 9 malonyl-CoA units. The FAD-dependent monooxygenase adaC then performs hydroxylation at C2 while the polaketide chain is still attached to the NRPKS adaA. The alpha-hydroxylation step at C2 appears to be crucial for the following C18-C1 Claisen cyclization and release of the C9-hydroxyl version of TAN-1612 from the NRPKS adaA, two steps performed by the lactamase-like protein adaB. Finally, the O-methyltransferase adaD performs the C9 O-methylation to complete the biosynthesis of TAN-1612. This chain is O-methyltransferase adaD, found in Aspergillus niger (strain ATCC MYA-4892 / CBS 513.88 / FGSC A1513).